The following is a 408-amino-acid chain: 3-ketoacyl-CoA thiolase B, peroxisomal (408 aa).

Residue cysteine 112 is the Acyl-thioester intermediate of the active site. Residues histidine 366 and cysteine 394 each act as proton acceptor in the active site.

This sequence belongs to the thiolase-like superfamily. Thiolase family. Homodimer.

The protein localises to the peroxisome. It catalyses the reaction an acyl-CoA + acetyl-CoA = a 3-oxoacyl-CoA + CoA. Its pathway is lipid metabolism; fatty acid metabolism. The polypeptide is 3-ketoacyl-CoA thiolase B, peroxisomal (Candida tropicalis (Yeast)).